The sequence spans 599 residues: Elongation factor 4 (599 aa).

One can recognise a tr-type G domain in the interval 2-184 (KNIRNFSIIA…RLVRDIPPPE (183 aa)). GTP contacts are provided by residues 14–19 (DHGKST) and 131–134 (NKID).

This sequence belongs to the TRAFAC class translation factor GTPase superfamily. Classic translation factor GTPase family. LepA subfamily.

It is found in the cell inner membrane. The catalysed reaction is GTP + H2O = GDP + phosphate + H(+). Its function is as follows. Required for accurate and efficient protein synthesis under certain stress conditions. May act as a fidelity factor of the translation reaction, by catalyzing a one-codon backward translocation of tRNAs on improperly translocated ribosomes. Back-translocation proceeds from a post-translocation (POST) complex to a pre-translocation (PRE) complex, thus giving elongation factor G a second chance to translocate the tRNAs correctly. Binds to ribosomes in a GTP-dependent manner. This Escherichia coli O8 (strain IAI1) protein is Elongation factor 4.